The chain runs to 117 residues: Aspartate 1-decarboxylase (117 aa).

The Schiff-base intermediate with substrate; via pyruvic acid role is filled by serine 25. Serine 25 bears the Pyruvic acid (Ser) mark. Position 57 (threonine 57) interacts with substrate. Residue tyrosine 58 is the Proton donor of the active site. 72 to 74 contributes to the substrate binding site; the sequence is GAA.

This sequence belongs to the PanD family. As to quaternary structure, heterooctamer of four alpha and four beta subunits. Pyruvate serves as cofactor. Post-translationally, is synthesized initially as an inactive proenzyme, which is activated by self-cleavage at a specific serine bond to produce a beta-subunit with a hydroxyl group at its C-terminus and an alpha-subunit with a pyruvoyl group at its N-terminus.

The protein localises to the cytoplasm. The enzyme catalyses L-aspartate + H(+) = beta-alanine + CO2. It participates in cofactor biosynthesis; (R)-pantothenate biosynthesis; beta-alanine from L-aspartate: step 1/1. In terms of biological role, catalyzes the pyruvoyl-dependent decarboxylation of aspartate to produce beta-alanine. The sequence is that of Aspartate 1-decarboxylase from Helicobacter pylori (strain J99 / ATCC 700824) (Campylobacter pylori J99).